The primary structure comprises 134 residues: Ribonuclease P protein component (134 aa).

It belongs to the RnpA family. In terms of assembly, consists of a catalytic RNA component (M1 or rnpB) and a protein subunit.

The catalysed reaction is Endonucleolytic cleavage of RNA, removing 5'-extranucleotides from tRNA precursor.. RNaseP catalyzes the removal of the 5'-leader sequence from pre-tRNA to produce the mature 5'-terminus. It can also cleave other RNA substrates such as 4.5S RNA. The protein component plays an auxiliary but essential role in vivo by binding to the 5'-leader sequence and broadening the substrate specificity of the ribozyme. In Ectopseudomonas mendocina (strain ymp) (Pseudomonas mendocina), this protein is Ribonuclease P protein component.